Here is a 525-residue protein sequence, read N- to C-terminus: Probable feruloyl esterase B-1 (525 aa).

An N-terminal signal peptide occupies residues 1 to 20 (MMRWFLLIGLASAAATDSSA). Intrachain disulfides connect C26–C75, C61–C114, C187–C442, C256–C273, C282–C292, and C502–C524. N-linked (GlcNAc...) asparagine glycosylation is found at N51, N80, and N98. The active-site Acyl-ester intermediate is the S188. The Ca(2+) site is built by D257, D260, A262, and D264. N-linked (GlcNAc...) asparagine glycosylation is found at N283, N288, and N351. Residues D401 and H441 each act as charge relay system in the active site.

This sequence belongs to the tannase family.

Its subcellular location is the secreted. It catalyses the reaction feruloyl-polysaccharide + H2O = ferulate + polysaccharide.. In terms of biological role, involved in degradation of plant cell walls. Hydrolyzes the feruloyl-arabinose ester bond in arabinoxylans as well as the feruloyl-galactose and feruloyl-arabinose ester bonds in pectin. This chain is Probable feruloyl esterase B-1 (faeB-1), found in Neosartorya fischeri (strain ATCC 1020 / DSM 3700 / CBS 544.65 / FGSC A1164 / JCM 1740 / NRRL 181 / WB 181) (Aspergillus fischerianus).